The primary structure comprises 171 residues: Peptide deformylase (171 aa).

Cysteine 87 and histidine 129 together coordinate Fe cation. Glutamate 130 is a catalytic residue. Residue histidine 133 participates in Fe cation binding.

The protein belongs to the polypeptide deformylase family. Fe(2+) serves as cofactor.

It catalyses the reaction N-terminal N-formyl-L-methionyl-[peptide] + H2O = N-terminal L-methionyl-[peptide] + formate. In terms of biological role, removes the formyl group from the N-terminal Met of newly synthesized proteins. Requires at least a dipeptide for an efficient rate of reaction. N-terminal L-methionine is a prerequisite for activity but the enzyme has broad specificity at other positions. The sequence is that of Peptide deformylase from Pseudothermotoga lettingae (strain ATCC BAA-301 / DSM 14385 / NBRC 107922 / TMO) (Thermotoga lettingae).